The following is a 365-amino-acid chain: Alanine racemase (365 aa).

Catalysis depends on lysine 32, which acts as the Proton acceptor; specific for D-alanine. The residue at position 32 (lysine 32) is an N6-(pyridoxal phosphate)lysine. Arginine 128 contributes to the substrate binding site. Catalysis depends on tyrosine 257, which acts as the Proton acceptor; specific for L-alanine. Methionine 305 serves as a coordination point for substrate.

The protein belongs to the alanine racemase family. The cofactor is pyridoxal 5'-phosphate.

The enzyme catalyses L-alanine = D-alanine. It participates in amino-acid biosynthesis; D-alanine biosynthesis; D-alanine from L-alanine: step 1/1. Catalyzes the interconversion of L-alanine and D-alanine. May also act on other amino acids. This chain is Alanine racemase (alr), found in Francisella philomiragia subsp. philomiragia (strain ATCC 25017 / CCUG 19701 / FSC 153 / O#319-036).